The sequence spans 202 residues: DNA polymerase III subunit epsilon (202 aa).

Asp-23 and Glu-25 together coordinate a divalent metal cation. Substrate is bound by residues Asp-23 and Glu-25. Catalysis depends on His-162, which acts as the Proton acceptor. Residue Asp-167 participates in a divalent metal cation binding. Substrate is bound at residue Asp-167.

DNA polymerase III contains a core (composed of alpha, epsilon and theta chains) that associates with a tau subunit. This core dimerizes to form the POLIII' complex. PolIII' associates with the gamma complex (composed of gamma, delta, delta', psi and chi chains) and with the beta chain to form the complete DNA polymerase III complex. It depends on Mg(2+) as a cofactor. The cofactor is Mn(2+).

It catalyses the reaction DNA(n) + a 2'-deoxyribonucleoside 5'-triphosphate = DNA(n+1) + diphosphate. Functionally, DNA polymerase III is a complex, multichain enzyme responsible for most of the replicative synthesis in bacteria. The epsilon subunit contain the editing function and is a proofreading 3'-5' exonuclease. This Aquifex aeolicus (strain VF5) protein is DNA polymerase III subunit epsilon (dnaQ).